The sequence spans 393 residues: Na(+)/H(+) antiporter NhaA 1 (393 aa).

11 consecutive transmembrane segments (helical) span residues 23-43 (AGGV…NSPF), 58-78 (LSLT…LVGL), 96-116 (MLPG…FTAF), 126-146 (GWAV…SLLG), 155-175 (VFLA…IAIF), 178-198 (AEIS…LFVM), 224-244 (GVHA…KAAP), 265-285 (VAFI…FAGL), 298-318 (IMLG…WLAI), 334-354 (LYGV…IGLL), and 367-387 (IGVL…LRLV).

It belongs to the NhaA Na(+)/H(+) (TC 2.A.33) antiporter family.

Its subcellular location is the cell inner membrane. The enzyme catalyses Na(+)(in) + 2 H(+)(out) = Na(+)(out) + 2 H(+)(in). Na(+)/H(+) antiporter that extrudes sodium in exchange for external protons. This is Na(+)/H(+) antiporter NhaA 1 from Brucella anthropi (strain ATCC 49188 / DSM 6882 / CCUG 24695 / JCM 21032 / LMG 3331 / NBRC 15819 / NCTC 12168 / Alc 37) (Ochrobactrum anthropi).